The chain runs to 379 residues: UDP-N-acetylglucosamine--N-acetylmuramyl-(pentapeptide) pyrophosphoryl-undecaprenol N-acetylglucosamine transferase (379 aa).

UDP-N-acetyl-alpha-D-glucosamine-binding positions include T10–G12, N124, R161, S195, and Q291.

This sequence belongs to the glycosyltransferase 28 family. MurG subfamily.

It is found in the cell membrane. The catalysed reaction is di-trans,octa-cis-undecaprenyl diphospho-N-acetyl-alpha-D-muramoyl-L-alanyl-D-glutamyl-meso-2,6-diaminopimeloyl-D-alanyl-D-alanine + UDP-N-acetyl-alpha-D-glucosamine = di-trans,octa-cis-undecaprenyl diphospho-[N-acetyl-alpha-D-glucosaminyl-(1-&gt;4)]-N-acetyl-alpha-D-muramoyl-L-alanyl-D-glutamyl-meso-2,6-diaminopimeloyl-D-alanyl-D-alanine + UDP + H(+). Its pathway is cell wall biogenesis; peptidoglycan biosynthesis. In terms of biological role, cell wall formation. Catalyzes the transfer of a GlcNAc subunit on undecaprenyl-pyrophosphoryl-MurNAc-pentapeptide (lipid intermediate I) to form undecaprenyl-pyrophosphoryl-MurNAc-(pentapeptide)GlcNAc (lipid intermediate II). The sequence is that of UDP-N-acetylglucosamine--N-acetylmuramyl-(pentapeptide) pyrophosphoryl-undecaprenol N-acetylglucosamine transferase from Thermobifida fusca (strain YX).